Consider the following 398-residue polypeptide: Acetate kinase (398 aa).

Residue N8 coordinates Mg(2+). ATP is bound at residue K15. R89 provides a ligand contact to substrate. Catalysis depends on D146, which acts as the Proton donor/acceptor. ATP-binding positions include 206 to 210, 283 to 285, and 331 to 335; these read HIGNG, DMR, and GMGEN. Residue E383 participates in Mg(2+) binding.

The protein belongs to the acetokinase family. Homodimer. The cofactor is Mg(2+). Mn(2+) is required as a cofactor.

The protein resides in the cytoplasm. The enzyme catalyses acetate + ATP = acetyl phosphate + ADP. The protein operates within metabolic intermediate biosynthesis; acetyl-CoA biosynthesis; acetyl-CoA from acetate: step 1/2. Its function is as follows. Catalyzes the formation of acetyl phosphate from acetate and ATP. Can also catalyze the reverse reaction. This is Acetate kinase from Streptococcus pyogenes serotype M28 (strain MGAS6180).